The primary structure comprises 618 residues: Dihydroxy-acid dehydratase (618 aa).

Aspartate 81 is a binding site for Mg(2+). Cysteine 122 contributes to the [2Fe-2S] cluster binding site. Mg(2+)-binding residues include aspartate 123 and lysine 124. N6-carboxylysine is present on lysine 124. Cysteine 195 is a [2Fe-2S] cluster binding site. Glutamate 491 serves as a coordination point for Mg(2+). Serine 517 acts as the Proton acceptor in catalysis.

It belongs to the IlvD/Edd family. In terms of assembly, homodimer. The cofactor is [2Fe-2S] cluster. It depends on Mg(2+) as a cofactor.

The catalysed reaction is (2R)-2,3-dihydroxy-3-methylbutanoate = 3-methyl-2-oxobutanoate + H2O. It carries out the reaction (2R,3R)-2,3-dihydroxy-3-methylpentanoate = (S)-3-methyl-2-oxopentanoate + H2O. Its pathway is amino-acid biosynthesis; L-isoleucine biosynthesis; L-isoleucine from 2-oxobutanoate: step 3/4. It participates in amino-acid biosynthesis; L-valine biosynthesis; L-valine from pyruvate: step 3/4. In terms of biological role, functions in the biosynthesis of branched-chain amino acids. Catalyzes the dehydration of (2R,3R)-2,3-dihydroxy-3-methylpentanoate (2,3-dihydroxy-3-methylvalerate) into 2-oxo-3-methylpentanoate (2-oxo-3-methylvalerate) and of (2R)-2,3-dihydroxy-3-methylbutanoate (2,3-dihydroxyisovalerate) into 2-oxo-3-methylbutanoate (2-oxoisovalerate), the penultimate precursor to L-isoleucine and L-valine, respectively. This Rhodopseudomonas palustris (strain ATCC BAA-98 / CGA009) protein is Dihydroxy-acid dehydratase.